A 629-amino-acid polypeptide reads, in one-letter code: MQTYDAGTFDVIVVGAGHAGVEAGLASGRMGAKTLMLTINLDMVAFMPCNPSVGGPAKGVVVREIDALGGEMGRNTDKTYIQMRMLNTGKGPAVRALRAQADKWDYQHEMKHTIEKEENITLRQGLVDRLVIEDGVCKGVITNSGAIYYAKTVVITTGTFSRGEIIVGELRYSSGPNNQQPSVKLSEHLEELGFELRRFKTGTPPRVKSSTIDYSKTEEQPGDDHPRAFSFDTVEMLLDQLPCWLTYTNETTHEIIQANLHRSPMFTATKKGTGARYCPSIEDKIVRFSDKPRHQIFLEPEGKNTEEVYVQGLSTSLPEEVQREMLRTIPGLENVEMMRVGYAIEYDAVMPDQLWPSLETKLVEGLFTAGQINGTSGYEEAAGQGLMAGINAARKVFEKEPVILGRDQAYIGVLIDDLVTKGTEEPYRLLTSRAEYRLLLRHDNADLRLTEIGHEIGLISDERYERFLAKQSAIEAEKERLQKTRIKPTAEVQAMLKEIGSGELKDGILAADLLRRPEITYDKIAQIVSRETFVTDEIAEQVEIQIKYEGYIQKSNLQVEKMKRMEDKKIPENIDYDAISGLATEALEKLKKIEPLSIAQASRISGVNPADISILLVYIEQGKIAKISK.

FAD-binding positions include 15–20 (GAGHAG), Val127, and Ser182. Residues 203-226 (TPPRVKSSTIDYSKTEEQPGDDHP) form a disordered region. Basic and acidic residues predominate over residues 215–226 (SKTEEQPGDDHP). 274–288 (GARYCPSIEDKIVRF) serves as a coordination point for NAD(+). Gln371 is an FAD binding site.

The protein belongs to the MnmG family. Homodimer. Heterotetramer of two MnmE and two MnmG subunits. Requires FAD as cofactor.

Its subcellular location is the cytoplasm. Its function is as follows. NAD-binding protein involved in the addition of a carboxymethylaminomethyl (cmnm) group at the wobble position (U34) of certain tRNAs, forming tRNA-cmnm(5)s(2)U34. The chain is tRNA uridine 5-carboxymethylaminomethyl modification enzyme MnmG from Listeria monocytogenes serovar 1/2a (strain ATCC BAA-679 / EGD-e).